Here is a 300-residue protein sequence, read N- to C-terminus: UDP-N-acetylenolpyruvoylglucosamine reductase (300 aa).

In terms of domain architecture, FAD-binding PCMH-type spans 29–193 (TGGPADLLVF…LSATFKLRSG (165 aa)). Arg-172 is a catalytic residue. Catalysis depends on Ser-222, which acts as the Proton donor. Residue Glu-292 is part of the active site.

The protein belongs to the MurB family. FAD serves as cofactor.

It localises to the cytoplasm. The catalysed reaction is UDP-N-acetyl-alpha-D-muramate + NADP(+) = UDP-N-acetyl-3-O-(1-carboxyvinyl)-alpha-D-glucosamine + NADPH + H(+). The protein operates within cell wall biogenesis; peptidoglycan biosynthesis. Its function is as follows. Cell wall formation. This chain is UDP-N-acetylenolpyruvoylglucosamine reductase, found in Pediococcus pentosaceus (strain ATCC 25745 / CCUG 21536 / LMG 10740 / 183-1w).